The sequence spans 106 residues: Large ribosomal subunit protein uL24 (106 aa).

The protein belongs to the universal ribosomal protein uL24 family. As to quaternary structure, part of the 50S ribosomal subunit.

Its function is as follows. One of two assembly initiator proteins, it binds directly to the 5'-end of the 23S rRNA, where it nucleates assembly of the 50S subunit. One of the proteins that surrounds the polypeptide exit tunnel on the outside of the subunit. The chain is Large ribosomal subunit protein uL24 from Polaromonas sp. (strain JS666 / ATCC BAA-500).